A 279-amino-acid polypeptide reads, in one-letter code: Protease HtpX homolog (279 aa).

Transmembrane regions (helical) follow at residues 4–24 and 34–54; these read IFLFLATNIAVLVVINIVLAV and GSLLAYSAVVGFTGSIISLLM. H140 contacts Zn(2+). The active site involves E141. Residue H144 coordinates Zn(2+). A run of 2 helical transmembrane segments spans residues 155 to 175 and 189 to 209; these read LIQGVVNTFVVFLSRIIANLI and FLVSMVFQILFGFLASLIVMW. E215 is a Zn(2+) binding site.

This sequence belongs to the peptidase M48B family. The cofactor is Zn(2+).

The protein resides in the cell inner membrane. This is Protease HtpX homolog from Neisseria meningitidis serogroup B (strain ATCC BAA-335 / MC58).